The following is a 180-amino-acid chain: Vacuolar transporter chaperone complex subunit 1 (180 aa).

Residues 1 to 70 are Cytoplasmic-facing; sequence MASVIEKGLA…PKTFFANERT (70 aa). Residues 71–91 traverse the membrane as a helical segment; the sequence is FLKWMSISVMIGMMSLTLLNF. The Vacuolar segment spans residues 92–100; the sequence is GDTSSNASE. The helical transmembrane segment at 101–121 threads the bilayer; it reads LAGLVLLPVSILFMIHSLFVF. Residues 122–140 lie on the Cytoplasmic side of the membrane; sequence KDRANKIYMREPMRYDDTK. Residues 141 to 161 traverse the membrane as a helical segment; sequence GPTILVLVLGVSLGIAAIFSV. Residues 162–180 lie on the Vacuolar side of the membrane; sequence QKQYYRTASSSFNDGPRFS.

This sequence belongs to the VTC1 family. The VTC core complex is an integral membrane heterooligomer composed of at least the catalytic subunit vtc4 and the accessory subunits vtc1 and vtc2. vtc1 is a small membrane protein without hydrophilic domain. Vtc2 and vtc4 are related and have 2 hydrophilic domains that face the cytosol, an N-terminal SPX domain and the central core domain. The central core in vtc4 is the catalytic domain.

Its subcellular location is the acidocalcisome membrane. Accessory subunit of the vacuolar transporter chaperone (VTC) complex. The VTC complex acts as a vacuolar polyphosphate polymerase that catalyzes the synthesis of inorganic polyphosphate (polyP) via transfer of phosphate from ATP to a growing polyP chain, releasing ADP. VTC exposes its catalytic domain vtc4 to the cytosol, where the growing polyP chain winds through a tunnel-shaped pocket, integrating cytoplasmic polymer synthesis with polyP membrane translocation. The VTC complex carries 9 vacuolar transmembrane domains, which are likely to constitute the translocation channel into the organelle lumen. PolyP synthesis is tightly coupled to its transport into the vacuole lumen, in order to avoid otherwise toxic intermediates in the cytosol, and it depends on the proton gradient across the membrane, formed by V-ATPase. VTC1 contributes only 3 transmembrane domains to the complex. The VTC complex also plays a role in vacuolar membrane fusion. In Trypanosoma brucei brucei (strain 927/4 GUTat10.1), this protein is Vacuolar transporter chaperone complex subunit 1 (VTC1).